The sequence spans 578 residues: MAGDESPTAAELRNQVRYLEAEVAALRRRLLEHPADGRSLESRLSETQASLASVTAQNERLAETLREAREKIIALKEEVDRLAQPPSGFGTFLGRNDDDTLDVFTGGRKLRVAASPSVDLDALKLGQELMLNEALNVVEACDFEVVGDVVMLKELLADGERALVIAQADEERVVRLASPLLDQALRAGDSLLLEPRSGYVYEKIPKSEVEELVLEEVPDIDYTQIGGLFGQIEQIRDAVEMPYLHKDLFLEHELKPPKGVLLYGPPGCGKTLIAKAVANSLAKKVAEKTGVEGRSFFLNIKGPELLNKYVGETERHIRLVFQRAREKASEGMPVIVFFDEMDSLFRTRGSGVSSDVENTIVPQLLSEIDGVEGLENVIVIGASNREDMIDPAILRPGRLDVKIKIERPDAEAARDIFSKYLTTTLPLHADDVNEFGGDRRECVNGMIQRTVERMYTEADENRFLEVTYANGDKEVLYFKDFNSGAMIQNIVDRAKKMAIKAFLDDNQKGLRVQHLLQACVDEFKENEDLPNTTNPDDWARISGKKGERIVYIRTLISGKQGTEPGRSIDTATNTGQYL.

The stretch at 8–84 (TAAELRNQVR…LKEEVDRLAQ (77 aa)) forms a coiled coil. An ATP-binding site is contributed by 267-272 (GCGKTL). Positions 577 to 578 (YL) are docks into pockets in the proteasome alpha-ring.

This sequence belongs to the AAA ATPase family. In terms of assembly, homohexamer. Assembles into a hexameric ring structure that caps the 20S proteasome core. Strongly interacts with the prokaryotic ubiquitin-like protein Pup through a hydrophobic interface; the interacting region of ARC lies in its N-terminal coiled-coil domain. There is one Pup binding site per ARC hexamer ring. Upon ATP-binding, the C-terminus of ARC interacts with the alpha-rings of the proteasome core, possibly by binding to the intersubunit pockets.

The protein operates within protein degradation; proteasomal Pup-dependent pathway. In terms of biological role, ATPase which is responsible for recognizing, binding, unfolding and translocation of pupylated proteins into the bacterial 20S proteasome core particle. May be essential for opening the gate of the 20S proteasome via an interaction with its C-terminus, thereby allowing substrate entry and access to the site of proteolysis. Thus, the C-termini of the proteasomal ATPase may function like a 'key in a lock' to induce gate opening and therefore regulate proteolysis. The protein is Proteasome-associated ATPase of Kribbella flavida (strain DSM 17836 / JCM 10339 / NBRC 14399).